A 378-amino-acid chain; its full sequence is MKILVDENMPYARDLFSRLGEVTAVPGRPIPVAQLADADALMVRSVTKVNESLLAGKPIKFVGTATAGTDHVDEAWLKQAGIGFSAAPGCNAIAVVEYVFSSLLMLAERDGFSLHERTVGIVGVGNVGRRLQARLEALGIKTLLCDPPRADRGDEGDFRSLDELVQHADILTFHTPLFKDGPYKTLHLADEKLIRSLKPGAILINACRGAVVDNTALLTCLNEGQKLSVVLDVWEGEPELNVELLKKVDIGTPHIAGYTLEGKARGTTQVFEAYSKFIGHEQHVALDTLLPAPEFGRITLHGPLDQPTLKRLVHLVYDVRRDDAPLRKVAGIPGEFDKLRKNYLERREWSSLYVICDDASAASLLCKLGFNAVHHPAR.

Substrate contacts are provided by serine 45 and threonine 66. Aspartate 146 and threonine 175 together coordinate NAD(+). Residue arginine 208 is part of the active site. Aspartate 232 is an NAD(+) binding site. Glutamate 237 is a catalytic residue. The active-site Proton donor is histidine 254. Residue glycine 257 participates in NAD(+) binding. Residue tyrosine 258 participates in substrate binding.

The protein belongs to the D-isomer specific 2-hydroxyacid dehydrogenase family. PdxB subfamily. Homodimer.

The protein localises to the cytoplasm. The enzyme catalyses 4-phospho-D-erythronate + NAD(+) = (R)-3-hydroxy-2-oxo-4-phosphooxybutanoate + NADH + H(+). It functions in the pathway cofactor biosynthesis; pyridoxine 5'-phosphate biosynthesis; pyridoxine 5'-phosphate from D-erythrose 4-phosphate: step 2/5. Functionally, catalyzes the oxidation of erythronate-4-phosphate to 3-hydroxy-2-oxo-4-phosphonooxybutanoate. This Escherichia coli O6:H1 (strain CFT073 / ATCC 700928 / UPEC) protein is Erythronate-4-phosphate dehydrogenase.